Reading from the N-terminus, the 226-residue chain is Putative N-acetylmannosamine-6-phosphate 2-epimerase (226 aa).

This sequence belongs to the NanE family.

The catalysed reaction is an N-acyl-D-glucosamine 6-phosphate = an N-acyl-D-mannosamine 6-phosphate. It participates in amino-sugar metabolism; N-acetylneuraminate degradation; D-fructose 6-phosphate from N-acetylneuraminate: step 3/5. Functionally, converts N-acetylmannosamine-6-phosphate (ManNAc-6-P) to N-acetylglucosamine-6-phosphate (GlcNAc-6-P). This is Putative N-acetylmannosamine-6-phosphate 2-epimerase from Mycoplasma mycoides subsp. mycoides SC (strain CCUG 32753 / NCTC 10114 / PG1).